Reading from the N-terminus, the 238-residue chain is Ribonuclease PH (238 aa).

Phosphate contacts are provided by residues arginine 86 and 124-126 (GTR).

The protein belongs to the RNase PH family. In terms of assembly, homohexameric ring arranged as a trimer of dimers.

The catalysed reaction is tRNA(n+1) + phosphate = tRNA(n) + a ribonucleoside 5'-diphosphate. Phosphorolytic 3'-5' exoribonuclease that plays an important role in tRNA 3'-end maturation. Removes nucleotide residues following the 3'-CCA terminus of tRNAs; can also add nucleotides to the ends of RNA molecules by using nucleoside diphosphates as substrates, but this may not be physiologically important. Probably plays a role in initiation of 16S rRNA degradation (leading to ribosome degradation) during starvation. In Serratia proteamaculans (strain 568), this protein is Ribonuclease PH.